Consider the following 177-residue polypeptide: ATP synthase subunit delta (177 aa).

The protein belongs to the ATPase delta chain family. As to quaternary structure, F-type ATPases have 2 components, F(1) - the catalytic core - and F(0) - the membrane proton channel. F(1) has five subunits: alpha(3), beta(3), gamma(1), delta(1), epsilon(1). F(0) has three main subunits: a(1), b(2) and c(10-14). The alpha and beta chains form an alternating ring which encloses part of the gamma chain. F(1) is attached to F(0) by a central stalk formed by the gamma and epsilon chains, while a peripheral stalk is formed by the delta and b chains.

The protein resides in the cell inner membrane. Its function is as follows. F(1)F(0) ATP synthase produces ATP from ADP in the presence of a proton or sodium gradient. F-type ATPases consist of two structural domains, F(1) containing the extramembraneous catalytic core and F(0) containing the membrane proton channel, linked together by a central stalk and a peripheral stalk. During catalysis, ATP synthesis in the catalytic domain of F(1) is coupled via a rotary mechanism of the central stalk subunits to proton translocation. In terms of biological role, this protein is part of the stalk that links CF(0) to CF(1). It either transmits conformational changes from CF(0) to CF(1) or is implicated in proton conduction. This chain is ATP synthase subunit delta, found in Pasteurella multocida (strain Pm70).